Here is a 116-residue protein sequence, read N- to C-terminus: Small ribosomal subunit protein uS13m (116 aa).

The segment at 92-116 (HQDGSPLRGQRTHTNARTARKQIRK) is disordered.

Belongs to the universal ribosomal protein uS13 family. In terms of assembly, part of the small ribosomal subunit.

Its subcellular location is the mitochondrion. Located at the top of the head of the small subunit, it contacts several helices of the 18S rRNA. This is Small ribosomal subunit protein uS13m (RPS13) from Triticum aestivum (Wheat).